Consider the following 187-residue polypeptide: Elongation factor P 1 (187 aa).

Belongs to the elongation factor P family.

Its subcellular location is the cytoplasm. Its pathway is protein biosynthesis; polypeptide chain elongation. Functionally, involved in peptide bond synthesis. Stimulates efficient translation and peptide-bond synthesis on native or reconstituted 70S ribosomes in vitro. Probably functions indirectly by altering the affinity of the ribosome for aminoacyl-tRNA, thus increasing their reactivity as acceptors for peptidyl transferase. In Geobacter sulfurreducens (strain ATCC 51573 / DSM 12127 / PCA), this protein is Elongation factor P 1.